Consider the following 364-residue polypeptide: C2 calcium-dependent domain-containing protein 4A (364 aa).

Disordered stretches follow at residues 118–175 (GSPS…PPRC) and 192–242 (AGRS…RPER). The span at 220 to 233 (SPGSPTQAPVTSLS) shows a compositional bias: polar residues. Residues 254 to 364 (AGGALRLAAE…ELLLGPLLLL (111 aa)) form the C2 domain.

The protein belongs to the C2CD4 family.

The protein localises to the nucleus. Its function is as follows. May be involved in inflammatory process. May regulate cell architecture and adhesion. In Bos taurus (Bovine), this protein is C2 calcium-dependent domain-containing protein 4A (C2CD4A).